The chain runs to 176 residues: Ribosome maturation factor RimM (176 aa).

The region spanning 96 to 176 (PEDEFYWRDL…QILVDWDPDF (81 aa)) is the PRC barrel domain.

This sequence belongs to the RimM family. As to quaternary structure, binds ribosomal protein uS19.

The protein localises to the cytoplasm. Its function is as follows. An accessory protein needed during the final step in the assembly of 30S ribosomal subunit, possibly for assembly of the head region. Essential for efficient processing of 16S rRNA. May be needed both before and after RbfA during the maturation of 16S rRNA. It has affinity for free ribosomal 30S subunits but not for 70S ribosomes. This is Ribosome maturation factor RimM from Shewanella piezotolerans (strain WP3 / JCM 13877).